Here is a 115-residue protein sequence, read N- to C-terminus: uncharacterized protein (115 aa).

A disordered region spans residues 1–115 (MGETWFLTPN…ARSPERTPSP (115 aa)). Residues 7–17 (LTPNGQSSPGS) show a composition bias toward polar residues. Low complexity-rich tracts occupy residues 60–70 (ASCAPRATPRR) and 91–107 (SASAPAGPASSAPWPAR).

This is an uncharacterized protein from Human adenovirus C serotype 2 (HAdV-2).